A 669-amino-acid chain; its full sequence is UvrABC system protein B (669 aa).

The Helicase ATP-binding domain occupies 26-183; it reads TNFHAGIAKQ…RHLTELQYTR (158 aa). 39-46 provides a ligand contact to ATP; it reads GVTGSGKT. A Beta-hairpin motif is present at residues 92-115; the sequence is YYDYYQPEAYVPASDTFIEKDSSI. Residues 431-597 form the Helicase C-terminal domain; sequence QVDDLISQIN…SVVRPISDIL (167 aa). The 36-residue stretch at 631–666 folds into the UVR domain; sequence AAQMKVLEQKMYQHARDLEFEDAARIRDQIQRLREA.

It belongs to the UvrB family. As to quaternary structure, forms a heterotetramer with UvrA during the search for lesions. Interacts with UvrC in an incision complex.

The protein resides in the cytoplasm. Its function is as follows. The UvrABC repair system catalyzes the recognition and processing of DNA lesions. A damage recognition complex composed of 2 UvrA and 2 UvrB subunits scans DNA for abnormalities. Upon binding of the UvrA(2)B(2) complex to a putative damaged site, the DNA wraps around one UvrB monomer. DNA wrap is dependent on ATP binding by UvrB and probably causes local melting of the DNA helix, facilitating insertion of UvrB beta-hairpin between the DNA strands. Then UvrB probes one DNA strand for the presence of a lesion. If a lesion is found the UvrA subunits dissociate and the UvrB-DNA preincision complex is formed. This complex is subsequently bound by UvrC and the second UvrB is released. If no lesion is found, the DNA wraps around the other UvrB subunit that will check the other stand for damage. The chain is UvrABC system protein B from Xylella fastidiosa (strain M23).